A 275-amino-acid chain; its full sequence is Esterase AAEL000016 (275 aa).

The segment at 1-21 (MMANETAAKSTKSSPTPAVEP) is disordered. Residues 7–16 (AAKSTKSSPT) are compositionally biased toward polar residues. Catalysis depends on charge relay system residues serine 129, aspartate 187, and histidine 214. The disordered stretch occupies residues 253 to 275 (LVDDSGPAGNGVHDDDDDDDDSD). The segment covering 266–275 (DDDDDDDDSD) has biased composition (acidic residues).

The protein belongs to the LovG family.

The chain is Esterase AAEL000016 from Aedes aegypti (Yellowfever mosquito).